Reading from the N-terminus, the 529-residue chain is Delayed-rectifier potassium channel regulatory subunit KCNS1 (529 aa).

Residues 1-217 (MLMLLVRGTH…LTMENPGYSL (217 aa)) lie on the Cytoplasmic side of the membrane. Residues 218-239 (PSKLFSCVSISVVLASIAAMCI) form a helical membrane-spanning segment. Over 240-270 (HSLPEYQAREAAAAVAAVAAGRSPEGVRDDP) the chain is Extracellular. A helical transmembrane segment spans residues 271–293 (VLRRLEYFCIAWFSFEVSSRLLL). Residues 294 to 304 (APSTRNFFCHP) lie on the Cytoplasmic side of the membrane. The helical transmembrane segment at 305–322 (LNLIDIVSVLPFYLTLLA) threads the bilayer. Residues 323–340 (GVALGDQGGTGGKELGHL) are Extracellular-facing. Residues 341–361 (GKVVQVFRLMRIFRVLKLARH) traverse the membrane as a helical; Voltage-sensor segment. Residues 362-376 (STGLRSLGATLKHSY) lie on the Cytoplasmic side of the membrane. Residues 377-398 (REVGILLLYLAVGVSVFSGVAY) form a helical membrane-spanning segment. The Extracellular portion of the chain corresponds to 399–411 (TAEKEEDVGFNTI). An intramembrane region (helical) is located at residues 412-423 (PACWWWGTVSMT). Positions 424–429 (TVGYGD) match the Selectivity filter motif. The stretch at 424–431 (TVGYGDVV) is an intramembrane region. Topologically, residues 432 to 438 (PVTVAGK) are extracellular. Residues 439-467 (LAASGCILGGILVVALPITIIFNKFSHFY) traverse the membrane as a helical segment. Residues 468–529 (RRQKALEAAV…PSEPPHPQMY (62 aa)) are Cytoplasmic-facing. The segment at 494–529 (GVSEASLETSRETSQEGRSADLETQAPSEPPHPQMY) is disordered. Residues 502 to 514 (TSRETSQEGRSAD) are compositionally biased toward basic and acidic residues.

The protein belongs to the potassium channel family. S (TC 1.A.1.2) subfamily. Kv9.1/KCNS1 sub-subfamily. In terms of assembly, heterotetramer with KCNB1. Heterotetramer with KCNB2. Does not form homomultimers.

Its subcellular location is the cell membrane. In terms of biological role, potassium channel regulatory subunit that modulate the delayed rectifier voltage-gated potassium channel activity of KCNB1 and KCNB2 by altering their kinetics, expression levels, and shifting the half-inactivation potential to more polarized values. While it does not form functional channels on its own, it can form functional heterotetrameric channels with KCNB1 and KCNB2. Each regulatory subunit has unique regulatory properties that can lead to extensive inhibition, significant changes in kinetics, and/or substantial shifts in the voltage dependencies of the inactivation process. This chain is Delayed-rectifier potassium channel regulatory subunit KCNS1, found in Chlorocebus aethiops (Green monkey).